The following is an 856-amino-acid chain: V-type proton ATPase subunit a (856 aa).

Topologically, residues 1–409 (MAPKQDTPFR…NAYGTATYQE (409 aa)) are cytoplasmic. Residues 410-428 (VNPAIPVIVTFPFLFAVMF) form a helical membrane-spanning segment. Residues 429–430 (GD) lie on the Vacuolar side of the membrane. The helical transmembrane segment at 431 to 447 (FGHALIMLCAALAMIYW) threads the bilayer. Residues 448-460 (EKPLKKVTFELFA) are Cytoplasmic-facing. A helical membrane pass occupies residues 461 to 490 (MVFYGRYIVLVMAVFSVYTGLIYNDVFSKS). The Vacuolar portion of the chain corresponds to 491 to 544 (MTLFDSQWKWVVPENFKEGMTVKAVLREPNGYRYPFGLDWRWHGTENELLFINS). A helical membrane pass occupies residues 545 to 564 (YKMKMAIILGWAHMTYSLCF). The Cytoplasmic segment spans residues 565-582 (SYINARHFKRPIDIWGNF). A helical membrane pass occupies residues 583–603 (VPGMIFFQSIFGYLVLCIIYK). Residues 604–648 (WSVDWFGTGRQPPGLLNMLIYMFLQPGTLDGGVELYPGQATVQVI) are Vacuolar-facing. The chain crosses the membrane as a helical span at residues 649 to 668 (LLLLAVIQVPILLFLKPFYL). Topologically, residues 669–738 (RWENNRARAK…EVMIHQVIHT (70 aa)) are cytoplasmic. Residues 689–710 (VSALDEDDEEDPSNGDDYEGAA) are disordered. Over residues 692-707 (LDEDDEEDPSNGDDYE) the composition is skewed to acidic residues. The helical transmembrane segment at 739-763 (IEFCLNSVSHTASYLRLWALSLAHQ) threads the bilayer. Over 764-784 (QLSAVLWSMTMAKALESKGLG) the chain is Vacuolar. Residues 785-823 (GAIFLVVAFAMFFVLSVIILIIMEGVSAMLHSLRLAWVE) form a helical membrane-spanning segment. Topologically, residues 824–856 (SFSKFAEFGGWPFTPFSFKQQLEESEELKEYIG) are cytoplasmic.

It belongs to the V-ATPase 116 kDa subunit family. As to quaternary structure, V-ATPase is a heteromultimeric enzyme composed of a peripheral catalytic V1 complex (components A to H) attached to an integral membrane V0 proton pore complex (components: a, c, c', c'', d, e, f and VOA1).

The protein resides in the vacuole membrane. Functionally, subunit of the V0 complex of vacuolar(H+)-ATPase (V-ATPase), a multisubunit enzyme composed of a peripheral complex (V1) that hydrolyzes ATP and a membrane integral complex (V0) that translocates protons. V-ATPase is responsible for acidifying and maintaining the pH of intracellular compartments. The chain is V-type proton ATPase subunit a (vph-1) from Neurospora crassa (strain ATCC 24698 / 74-OR23-1A / CBS 708.71 / DSM 1257 / FGSC 987).